Consider the following 59-residue polypeptide: Large ribosomal subunit protein bL32 (59 aa).

Belongs to the bacterial ribosomal protein bL32 family.

This Mycoplasma capricolum subsp. capricolum (strain California kid / ATCC 27343 / NCTC 10154) protein is Large ribosomal subunit protein bL32.